A 344-amino-acid polypeptide reads, in one-letter code: Heat-inducible transcription repressor HrcA (344 aa).

It belongs to the HrcA family.

In terms of biological role, negative regulator of class I heat shock genes (grpE-dnaK-dnaJ and groELS operons). Prevents heat-shock induction of these operons. The sequence is that of Heat-inducible transcription repressor HrcA from Streptococcus sanguinis (strain SK36).